A 180-amino-acid chain; its full sequence is Sperm protein associated with the nucleus on the X chromosome N2 (180 aa).

Disordered regions lie at residues 1–46 and 64–180; these read MEQP…KTKT and NSNQ…GGED. Positions 10–26 are enriched in basic and acidic residues; sequence GEKRKSPCESNNKKNDE. Positions 82–169 are enriched in acidic residues; sequence QEEEDEGLDS…SSQEDEDLDS (88 aa). Over residues 170–180 the composition is skewed to low complexity; that stretch reads SEGSSQEGGED.

The protein belongs to the SPAN-X family.

The chain is Sperm protein associated with the nucleus on the X chromosome N2 (SPANXN2) from Homo sapiens (Human).